A 394-amino-acid chain; its full sequence is Penicillopepsin-2 (394 aa).

An N-terminal signal peptide occupies residues 1 to 20 (MVVFSKITVVLAGLATVASA). The propeptide at 21–71 (VPTGTSRKSTFTVNQKARPVAQAKAINLPGMYASALSKYGAAVPASVKAAA) is activation peptide. The region spanning 87–391 (YLTPVNVGGT…DANGPRLGFA (305 aa)) is the Peptidase A1 domain. Residue Asp-103 is part of the active site. Asn-132 is a glycosylation site (N-linked (GlcNAc...) asparagine). Residue Asp-283 is part of the active site. Cys-319 and Cys-354 form a disulfide bridge.

This sequence belongs to the peptidase A1 family. Monomer.

The protein resides in the secreted. The enzyme catalyses Hydrolysis of proteins with broad specificity similar to that of pepsin A, preferring hydrophobic residues at P1 and P1', but also cleaving 20-Gly-|-Glu-21 in the B chain of insulin. Clots milk, and activates trypsinogen.. Its function is as follows. Secreted aspartic endopeptidase that allows assimilation of proteinaceous substrates. The scissile peptide bond is attacked by a nucleophilic water molecule activated by two aspartic residues in the active site. Shows a broad primary substrate specificity. Favors hydrophobic residues at the P1 and P1' positions, but can also activate trypsinogen and hydrolyze the B chain of insulin between positions 'Gly-20' and 'Glu-21'. The protein is Penicillopepsin-2 of Penicillium janthinellum (Penicillium vitale).